The sequence spans 93 residues: Integration host factor subunit beta (93 aa).

Residues 59–93 (RVGRNPKTGQSVSLDGKFVPHFKPGKELRDRVNDD) are disordered. The span at 82–93 (PGKELRDRVNDD) shows a compositional bias: basic and acidic residues.

Belongs to the bacterial histone-like protein family. As to quaternary structure, heterodimer of an alpha and a beta chain.

In terms of biological role, this protein is one of the two subunits of integration host factor, a specific DNA-binding protein that functions in genetic recombination as well as in transcriptional and translational control. The polypeptide is Integration host factor subunit beta (Stutzerimonas stutzeri (strain A1501) (Pseudomonas stutzeri)).